The chain runs to 788 residues: Endonuclease MutS2 (788 aa).

334–341 (GPNTGGKT) contacts ATP. The Smr domain maps to 713 to 788 (LDLRGKRYEE…GNGATVVKFQ (76 aa)).

Belongs to the DNA mismatch repair MutS family. MutS2 subfamily. In terms of assembly, homodimer. Binds to stalled ribosomes, contacting rRNA.

In terms of biological role, endonuclease that is involved in the suppression of homologous recombination and thus may have a key role in the control of bacterial genetic diversity. Its function is as follows. Acts as a ribosome collision sensor, splitting the ribosome into its 2 subunits. Detects stalled/collided 70S ribosomes which it binds and splits by an ATP-hydrolysis driven conformational change. Acts upstream of the ribosome quality control system (RQC), a ribosome-associated complex that mediates the extraction of incompletely synthesized nascent chains from stalled ribosomes and their subsequent degradation. Probably generates substrates for RQC. In Enterococcus faecalis (strain ATCC 700802 / V583), this protein is Endonuclease MutS2.